Consider the following 81-residue polypeptide: Photosystem I iron-sulfur center (81 aa).

4Fe-4S ferredoxin-type domains are found at residues 2–31 (SHSV…MVPW) and 37–68 (GQIA…VRVY). [4Fe-4S] cluster-binding residues include cysteine 11, cysteine 14, cysteine 17, cysteine 21, cysteine 48, cysteine 51, cysteine 54, and cysteine 58.

As to quaternary structure, the eukaryotic PSI reaction center is composed of at least 11 subunits. The cofactor is [4Fe-4S] cluster.

It localises to the plastid. The protein resides in the chloroplast thylakoid membrane. It carries out the reaction reduced [plastocyanin] + hnu + oxidized [2Fe-2S]-[ferredoxin] = oxidized [plastocyanin] + reduced [2Fe-2S]-[ferredoxin]. Apoprotein for the two 4Fe-4S centers FA and FB of photosystem I (PSI); essential for photochemical activity. FB is the terminal electron acceptor of PSI, donating electrons to ferredoxin. The C-terminus interacts with PsaA/B/D and helps assemble the protein into the PSI complex. Required for binding of PsaD and PsaE to PSI. PSI is a plastocyanin/cytochrome c6-ferredoxin oxidoreductase, converting photonic excitation into a charge separation, which transfers an electron from the donor P700 chlorophyll pair to the spectroscopically characterized acceptors A0, A1, FX, FA and FB in turn. The chain is Photosystem I iron-sulfur center from Euglena gracilis.